The chain runs to 155 residues: Large ribosomal subunit protein uL30 (155 aa).

Belongs to the universal ribosomal protein uL30 family. Part of the 50S ribosomal subunit.

This is Large ribosomal subunit protein uL30 from Pyrococcus furiosus (strain ATCC 43587 / DSM 3638 / JCM 8422 / Vc1).